Consider the following 67-residue polypeptide: Conotoxin VnMMSK-02 (67 aa).

Residues 1–20 (MMSKLGALLTICLLLFPLTA) form the signal peptide. A propeptide spanning residues 21-52 (LPLDGDQPADRPAERMQDDISSEQHPLFDKER) is cleaved from the precursor. Glutamine 53 carries the pyrrolidone carboxylic acid modification. Disulfide bonds link cysteine 54-cysteine 66, cysteine 55-cysteine 62, and cysteine 59-cysteine 65. The residue at position 64 (proline 64) is a 4-hydroxyproline. Cysteine 66 bears the Cysteine amide mark.

The protein belongs to the conotoxin M superfamily. As to expression, expressed by the venom duct.

It is found in the secreted. The chain is Conotoxin VnMMSK-02 from Conus ventricosus (Mediterranean cone).